The sequence spans 369 residues: 4-hydroxy-3-methylbut-2-en-1-yl diphosphate synthase (flavodoxin) (369 aa).

4 residues coordinate [4Fe-4S] cluster: C270, C273, C305, and E312.

It belongs to the IspG family. The cofactor is [4Fe-4S] cluster.

The catalysed reaction is (2E)-4-hydroxy-3-methylbut-2-enyl diphosphate + oxidized [flavodoxin] + H2O + 2 H(+) = 2-C-methyl-D-erythritol 2,4-cyclic diphosphate + reduced [flavodoxin]. It functions in the pathway isoprenoid biosynthesis; isopentenyl diphosphate biosynthesis via DXP pathway; isopentenyl diphosphate from 1-deoxy-D-xylulose 5-phosphate: step 5/6. Its function is as follows. Converts 2C-methyl-D-erythritol 2,4-cyclodiphosphate (ME-2,4cPP) into 1-hydroxy-2-methyl-2-(E)-butenyl 4-diphosphate. The chain is 4-hydroxy-3-methylbut-2-en-1-yl diphosphate synthase (flavodoxin) from Pseudomonas syringae pv. syringae (strain B728a).